The following is a 201-amino-acid chain: Dephospho-CoA kinase (201 aa).

A DPCK domain is found at 4–201 (AFFVTASIAC…VIQEISKGNM (198 aa)). Residue 12–17 (ACGKST) coordinates ATP.

The protein belongs to the CoaE family.

The protein localises to the cytoplasm. It carries out the reaction 3'-dephospho-CoA + ATP = ADP + CoA + H(+). It functions in the pathway cofactor biosynthesis; coenzyme A biosynthesis; CoA from (R)-pantothenate: step 5/5. Functionally, catalyzes the phosphorylation of the 3'-hydroxyl group of dephosphocoenzyme A to form coenzyme A. This chain is Dephospho-CoA kinase, found in Campylobacter jejuni subsp. jejuni serotype O:2 (strain ATCC 700819 / NCTC 11168).